Consider the following 467-residue polypeptide: Glycosyl hydrolase family 109 protein 1 (467 aa).

The N-terminal stretch at 1–22 (MKKLLLNTLIGLALLTCQTSFA) is a signal peptide. Residues 66–67 (MR), aspartate 88, 137–140 (WKHH), 157–158 (EV), and asparagine 186 each bind NAD(+). Substrate contacts are provided by residues tyrosine 215, arginine 231, 243-246 (YATH), and tyrosine 321. Position 243 (tyrosine 243) interacts with NAD(+).

This sequence belongs to the Gfo/Idh/MocA family. Glycosyl hydrolase 109 subfamily. NAD(+) serves as cofactor.

Glycosidase. The protein is Glycosyl hydrolase family 109 protein 1 of Bacteroides thetaiotaomicron (strain ATCC 29148 / DSM 2079 / JCM 5827 / CCUG 10774 / NCTC 10582 / VPI-5482 / E50).